Reading from the N-terminus, the 429-residue chain is uncharacterized protein (429 aa).

A run of 10 helical transmembrane segments spans residues 26–46, 51–71, 99–119, 135–155, 173–193, 223–243, 278–298, 311–331, 361–381, and 407–427; these read VALTGAAAVVVLPVITSHDIF, TGIDWDVIFLLVGMMIIVGVL, LVLVSALASALLDNVTTVLLI, TSFLMAEVFASNIGGAATLVG, FMLHLTPLVVIVLIALIAVLP, LLVKCGAVLVLVFAAFVAHPV, TLLFFAGLFIMVGALVKTGVV, GNIVATAFLILGVSAPISGII, WWALALGADFGGNLTAIGASA, and VVTAVSIALAAIYLWLRYFVL.

The protein belongs to the CitM (TC 2.A.11) transporter family.

The protein resides in the cell membrane. This is an uncharacterized protein from Mycobacterium tuberculosis (strain ATCC 25618 / H37Rv).